The sequence spans 384 residues: Sialyltransferase-like protein 3 (384 aa).

At 1 to 5 (MKRRH) the chain is on the cytoplasmic side. Residues 6–26 (WSHPSCGLLLLVAVFCLLLVF) traverse the membrane as a helical; Signal-anchor for type II membrane protein segment. Topologically, residues 27–384 (RCSQLRHSGD…FRLPPVSFYR (358 aa)) are lumenal. A glycan (N-linked (GlcNAc...) asparagine) is linked at Asn241.

It belongs to the glycosyltransferase 29 family.

The protein localises to the golgi apparatus membrane. Its function is as follows. Possesses sialyltransferase-like activity in vitro. Transfers sialic acid to the glycoprotein asialofetuin. The transferred sialic acid is linked to galactose of Gal-beta-1,3-GalNAc through alpha-2,6-linkage. This chain is Sialyltransferase-like protein 3, found in Oryza sativa subsp. indica (Rice).